We begin with the raw amino-acid sequence, 809 residues long: Glycerol-3-phosphate acyltransferase (809 aa).

Residues 306-311 (HRSHMD) carry the HXXXXD motif motif.

The protein belongs to the GPAT/DAPAT family.

Its subcellular location is the cell inner membrane. It carries out the reaction sn-glycerol 3-phosphate + an acyl-CoA = a 1-acyl-sn-glycero-3-phosphate + CoA. It participates in phospholipid metabolism; CDP-diacylglycerol biosynthesis; CDP-diacylglycerol from sn-glycerol 3-phosphate: step 1/3. In Vibrio vulnificus (strain CMCP6), this protein is Glycerol-3-phosphate acyltransferase.